The following is a 269-amino-acid chain: Homocitrate synthase subunit alpha (269 aa).

The Pyruvate carboxyltransferase domain maps to 3–255 (INIVDTTLRD…IYTGDFEDII (253 aa)).

The protein belongs to the alpha-IPM synthase/homocitrate synthase family. As to quaternary structure, heterodimer of an alpha and an omega chain.

The catalysed reaction is acetyl-CoA + 2-oxoglutarate + H2O = (2R)-homocitrate + CoA + H(+). Its function is as follows. This protein is a Fe-Mo-cofactor biosynthetic component. The protein is Homocitrate synthase subunit alpha (nifV-ALPHA) of Clostridium pasteurianum.